The primary structure comprises 500 residues: Adenylosuccinate synthetase, chloroplastic (500 aa).

Residues 87 to 93 and 115 to 117 contribute to the GTP site; these read GDEGKGK and GHT. Asp88 (proton acceptor) is an active-site residue. Mg(2+) is bound by residues Asp88 and Gly115. Residues 88 to 91, 113 to 116, Thr205, Arg219, Gln299, Thr314, and Arg378 contribute to the IMP site; these read DEGK and NAGH. The active-site Proton donor is His116. 374 to 380 contributes to the substrate binding site; sequence TTTGRPR. GTP is bound by residues Arg380, 406–408, and 489–491; these read KLD and GIG.

The protein belongs to the adenylosuccinate synthetase family. As to quaternary structure, homodimer. Requires Mg(2+) as cofactor.

It is found in the plastid. The protein localises to the chloroplast. The enzyme catalyses IMP + L-aspartate + GTP = N(6)-(1,2-dicarboxyethyl)-AMP + GDP + phosphate + 2 H(+). The protein operates within purine metabolism; AMP biosynthesis via de novo pathway; AMP from IMP: step 1/2. Functionally, plays an important role in the de novo pathway and in the salvage pathway of purine nucleotide biosynthesis. Catalyzes the first committed step in the biosynthesis of AMP from IMP. The chain is Adenylosuccinate synthetase, chloroplastic from Solanum bulbocastanum (Wild potato).